Reading from the N-terminus, the 304-residue chain is N-acetylmuramic acid 6-phosphate etherase (304 aa).

Positions 62-225 constitute an SIS domain; it reads IVTAFRQGGR…TTASMILMGK (164 aa). E90 acts as the Proton donor in catalysis. The active site involves E121.

It belongs to the GCKR-like family. MurNAc-6-P etherase subfamily. In terms of assembly, homodimer.

The enzyme catalyses N-acetyl-D-muramate 6-phosphate + H2O = N-acetyl-D-glucosamine 6-phosphate + (R)-lactate. The protein operates within amino-sugar metabolism; 1,6-anhydro-N-acetylmuramate degradation. Its pathway is amino-sugar metabolism; N-acetylmuramate degradation. It participates in cell wall biogenesis; peptidoglycan recycling. Functionally, specifically catalyzes the cleavage of the D-lactyl ether substituent of MurNAc 6-phosphate, producing GlcNAc 6-phosphate and D-lactate. Together with AnmK, is also required for the utilization of anhydro-N-acetylmuramic acid (anhMurNAc) either imported from the medium or derived from its own cell wall murein, and thus plays a role in cell wall recycling. The protein is N-acetylmuramic acid 6-phosphate etherase of Actinobacillus succinogenes (strain ATCC 55618 / DSM 22257 / CCUG 43843 / 130Z).